The sequence spans 204 residues: FMN-dependent NADH:quinone oxidoreductase (204 aa).

Ser9 is a binding site for FMN.

Belongs to the azoreductase type 1 family. In terms of assembly, homodimer. FMN serves as cofactor.

The catalysed reaction is 2 a quinone + NADH + H(+) = 2 a 1,4-benzosemiquinone + NAD(+). The enzyme catalyses N,N-dimethyl-1,4-phenylenediamine + anthranilate + 2 NAD(+) = 2-(4-dimethylaminophenyl)diazenylbenzoate + 2 NADH + 2 H(+). Quinone reductase that provides resistance to thiol-specific stress caused by electrophilic quinones. Functionally, also exhibits azoreductase activity. Catalyzes the reductive cleavage of the azo bond in aromatic azo compounds to the corresponding amines. The polypeptide is FMN-dependent NADH:quinone oxidoreductase (Thiobacillus denitrificans (strain ATCC 25259 / T1)).